The chain runs to 1440 residues: Bridge-like lipid transfer protein family member 3A (1440 aa).

The 93-residue stretch at 3–95 (GIIKKQILKH…KVEVEMKTCE (93 aa)) folds into the Chorein N-terminal domain. Disordered regions lie at residues 267–307 (SAHQ…NSSS), 430–456 (ADSL…FQPP), and 751–780 (KPSA…TEHD). The span at 287-307 (SAQQSWAQAFGGSQGNSNSSS) shows a compositional bias: low complexity. A phosphoserine mark is found at Ser-444, Ser-446, Ser-755, and Ser-758. A coiled-coil region spans residues 837–860 (ALLRLKEVLQRLQEQLTKDTESMT). The interval 891–1008 (VDADSAGSDS…ETAVNGQGEL (118 aa)) is disordered. Residues 911–920 (SEDRELKSDA) are compositionally biased toward basic and acidic residues. Over residues 985–995 (ASSSPAALKPP) the composition is skewed to low complexity. Phosphoserine occurs at positions 988, 1103, and 1106. A disordered region spans residues 1106-1180 (SFDGVSLDSS…SPAANSSVSP (75 aa)). Low complexity predominate over residues 1134-1150 (LLESESGPESVPPGSLS). A compositionally biased stretch (polar residues) spans 1151 to 1180 (NVSDNAGVQGSPLVNNYGQGSPAANSSVSP). The stretch at 1401–1435 (KELPILQKELIETKQALANANQDKEKLLQEIRKYN) forms a coiled coil.

In terms of assembly, homodimer (Potential). Interacts with UHRF1.

The protein resides in the late endosome. Functionally, tube-forming lipid transport protein which probably mediates the transfer of lipids between membranes at organelle contact sites. May be involved in the retrograde traffic of vesicle clusters in the endocytic pathway to the Golgi complex. This Homo sapiens (Human) protein is Bridge-like lipid transfer protein family member 3A.